A 269-amino-acid polypeptide reads, in one-letter code: Tryptophan synthase alpha chain (269 aa).

Residues Glu56 and Asp67 each act as proton acceptor in the active site.

The protein belongs to the TrpA family. Tetramer of two alpha and two beta chains.

The catalysed reaction is (1S,2R)-1-C-(indol-3-yl)glycerol 3-phosphate + L-serine = D-glyceraldehyde 3-phosphate + L-tryptophan + H2O. It functions in the pathway amino-acid biosynthesis; L-tryptophan biosynthesis; L-tryptophan from chorismate: step 5/5. The alpha subunit is responsible for the aldol cleavage of indoleglycerol phosphate to indole and glyceraldehyde 3-phosphate. This Mycobacterium marinum (strain ATCC BAA-535 / M) protein is Tryptophan synthase alpha chain.